The sequence spans 220 residues: Redox-sensing transcriptional repressor Rex (220 aa).

The H-T-H motif DNA-binding region spans 25-64; sequence WYLSNVKLLKQRGERFVSSTQISKEINIDASQIAKDLSYV. 99-104 is an NAD(+) binding site; it reads GVGSLG.

This sequence belongs to the transcriptional regulatory Rex family. Homodimer.

It is found in the cytoplasm. Modulates transcription in response to changes in cellular NADH/NAD(+) redox state. The protein is Redox-sensing transcriptional repressor Rex of Bacteroides thetaiotaomicron (strain ATCC 29148 / DSM 2079 / JCM 5827 / CCUG 10774 / NCTC 10582 / VPI-5482 / E50).